A 529-amino-acid chain; its full sequence is Chaperonin GroEL, chloroplastic (529 aa).

ATP-binding positions include 29–32, 86–90, G414, 480–482, and D496; these read TLGP, DGTTT, and DAA.

Belongs to the chaperonin (HSP60) family. As to quaternary structure, forms a cylinder of 14 subunits composed of two heptameric rings stacked back-to-back. Interacts with the co-chaperonin GroES.

It localises to the plastid. Its subcellular location is the chloroplast. The enzyme catalyses ATP + H2O + a folded polypeptide = ADP + phosphate + an unfolded polypeptide.. In terms of biological role, together with its co-chaperonin GroES, plays an essential role in assisting protein folding. The GroEL-GroES system forms a nano-cage that allows encapsulation of the non-native substrate proteins and provides a physical environment optimized to promote and accelerate protein folding. The sequence is that of Chaperonin GroEL, chloroplastic from Guillardia theta (Cryptophyte).